The sequence spans 360 residues: Phospho-N-acetylmuramoyl-pentapeptide-transferase (360 aa).

10 helical membrane passes run 18–38, 73–93, 97–117, 135–155, 168–188, 199–219, 236–256, 263–283, 288–308, and 339–359; these read VFSY…MMSL, TMGG…WADL, YVWA…VDDY, FWQS…STQA, VLPQ…VGTS, GLAI…AYLT, ASEL…FLWF, VFMG…IAVL, LLLI…ILQV, and IVRF…TLKI.

This sequence belongs to the glycosyltransferase 4 family. MraY subfamily. Mg(2+) serves as cofactor.

It is found in the cell inner membrane. The catalysed reaction is UDP-N-acetyl-alpha-D-muramoyl-L-alanyl-gamma-D-glutamyl-meso-2,6-diaminopimeloyl-D-alanyl-D-alanine + di-trans,octa-cis-undecaprenyl phosphate = di-trans,octa-cis-undecaprenyl diphospho-N-acetyl-alpha-D-muramoyl-L-alanyl-D-glutamyl-meso-2,6-diaminopimeloyl-D-alanyl-D-alanine + UMP. It functions in the pathway cell wall biogenesis; peptidoglycan biosynthesis. Its function is as follows. Catalyzes the initial step of the lipid cycle reactions in the biosynthesis of the cell wall peptidoglycan: transfers peptidoglycan precursor phospho-MurNAc-pentapeptide from UDP-MurNAc-pentapeptide onto the lipid carrier undecaprenyl phosphate, yielding undecaprenyl-pyrophosphoryl-MurNAc-pentapeptide, known as lipid I. This chain is Phospho-N-acetylmuramoyl-pentapeptide-transferase, found in Pseudoalteromonas translucida (strain TAC 125).